The following is a 211-amino-acid chain: Imidazole glycerol phosphate synthase subunit HisH (211 aa).

Residues 4 to 211 (TVALLDYGSG…QLLRNWINHI (208 aa)) form the Glutamine amidotransferase type-1 domain. Cysteine 82 functions as the Nucleophile in the catalytic mechanism. Catalysis depends on residues histidine 192 and glutamate 194.

Heterodimer of HisH and HisF.

The protein resides in the cytoplasm. It carries out the reaction 5-[(5-phospho-1-deoxy-D-ribulos-1-ylimino)methylamino]-1-(5-phospho-beta-D-ribosyl)imidazole-4-carboxamide + L-glutamine = D-erythro-1-(imidazol-4-yl)glycerol 3-phosphate + 5-amino-1-(5-phospho-beta-D-ribosyl)imidazole-4-carboxamide + L-glutamate + H(+). The enzyme catalyses L-glutamine + H2O = L-glutamate + NH4(+). Its pathway is amino-acid biosynthesis; L-histidine biosynthesis; L-histidine from 5-phospho-alpha-D-ribose 1-diphosphate: step 5/9. Functionally, IGPS catalyzes the conversion of PRFAR and glutamine to IGP, AICAR and glutamate. The HisH subunit catalyzes the hydrolysis of glutamine to glutamate and ammonia as part of the synthesis of IGP and AICAR. The resulting ammonia molecule is channeled to the active site of HisF. The sequence is that of Imidazole glycerol phosphate synthase subunit HisH from Corynebacterium efficiens (strain DSM 44549 / YS-314 / AJ 12310 / JCM 11189 / NBRC 100395).